The primary structure comprises 394 residues: Shematrin-like protein 2 (394 aa).

The signal sequence occupies residues 1 to 19 (MKPFISLASLIVLIASASA).

In terms of tissue distribution, prismatic layer of shell (at protein level). Expressed primarily in the mantle with highest level in the mantle edge and lower level in the mantle pallium.

The protein localises to the secreted. This chain is Shematrin-like protein 2, found in Pinctada maxima (Silver-lipped pearl oyster).